The sequence spans 354 residues: Kelch domain-containing protein 8B (354 aa).

8 Kelch repeats span residues 1-31 (MSAGGGRAFAWQVFPPMPTCRVYGTVAHQDE), 32-79 (HLLV…VLGK), 81-127 (VLVV…ERDG), 128-175 (MVYA…LHGN), 176-222 (KIYV…MAEG), 224-281 (VFSL…SLGG), 282-329 (HIVA…QAGP), and 331-354 (LFVIGGVAQGPSQAVEALCLRDGV).

Its subcellular location is the cytoplasm. It is found in the midbody. Functionally, involved in pinching off the separated nuclei at the cleavage furrow and in cytokinesis. Required for mitotic integrity and maintenance of chromosomal stability. Protects cells against mitotic errors, centrosomal amplification, micronucleus formation and aneuploidy. Plays a key role of midbody function involving abscission of the daughter cells during cytokinesis and appropriate chromosomal and nuclear segregation into the daughter cells. This chain is Kelch domain-containing protein 8B (KLHDC8B), found in Pongo abelii (Sumatran orangutan).